Here is a 401-residue protein sequence, read N- to C-terminus: S-adenosylmethionine synthase (401 aa).

His-15 is a binding site for ATP. Residue Asp-17 coordinates Mg(2+). Glu-48 contributes to the K(+) binding site. Residues Glu-61 and Gln-104 each contribute to the L-methionine site. A flexible loop region spans residues Gln-104–Arg-114. ATP is bound by residues Asp-179 to Lys-181, Arg-246 to Phe-247, Asp-255, Arg-261 to Lys-262, Ala-278, and Lys-282. Residue Asp-255 participates in L-methionine binding. Lys-286 is a binding site for L-methionine.

This sequence belongs to the AdoMet synthase family. In terms of assembly, homotetramer; dimer of dimers. Mg(2+) serves as cofactor. Requires K(+) as cofactor.

Its subcellular location is the cytoplasm. It carries out the reaction L-methionine + ATP + H2O = S-adenosyl-L-methionine + phosphate + diphosphate. Its pathway is amino-acid biosynthesis; S-adenosyl-L-methionine biosynthesis; S-adenosyl-L-methionine from L-methionine: step 1/1. Catalyzes the formation of S-adenosylmethionine (AdoMet) from methionine and ATP. The overall synthetic reaction is composed of two sequential steps, AdoMet formation and the subsequent tripolyphosphate hydrolysis which occurs prior to release of AdoMet from the enzyme. The chain is S-adenosylmethionine synthase from Petrotoga mobilis (strain DSM 10674 / SJ95).